Here is a 964-residue protein sequence, read N- to C-terminus: Collagen alpha-1(I) chain (964 aa).

The tract at residues 1–964 is disordered; the sequence is GGISVPGPMG…PGPPGPPGPP (964 aa). Residues Pro18, Pro21, Pro24, Pro33, Pro36, Pro39, Pro53, Pro68, Pro74, Pro83, and Pro89 each carry the 4-hydroxyproline modification. Over residues 56 to 70 the composition is skewed to basic and acidic residues; the sequence is NGDDGEAGKPGRPGE. Residue Lys92 is modified to 5-hydroxylysine; alternate. O-linked (Gal...) hydroxylysine; alternate glycosylation is present at Lys92. Ser98 bears the Phosphoserine mark. 2 stretches are compositionally biased toward low complexity: residues 106-117 and 126-144; these read DAGPAGPKQMGP and PGASGPAGARGNDGATGAA. 12 positions are modified to 4-hydroxyproline: Pro126, Pro147, Pro156, Pro159, Pro186, Pro189, Pro201, Pro207, Pro216, Pro222, Pro225, and Pro240. A compositionally biased stretch (pro residues) spans 146–158; it reads PPGPTGPAGPPGF. A compositionally biased stretch (low complexity) spans 192–231; it reads AGAAGPAGNPGADGQPGAKGANGAPGIAGAPGFPGARGPS. Residue Lys243 is modified to 5-hydroxylysine. 4-hydroxyproline occurs at positions 249, 252, 260, 269, 284, 290, 299, and 305. Positions 294–303 are enriched in gly residues; it reads GERGGPGSRG. The residue at position 314 (Lys314) is a 5-hydroxylysine. 4-hydroxyproline is present on residues Pro323, Pro332, Pro338, Pro344, Pro353, Pro356, Pro365, Pro374, Pro379, Pro391, Pro400, Pro409, Pro412, Pro430, Pro447, Pro453, Pro459, Pro465, Pro471, Pro477, Pro489, Pro498, Pro510, and Pro519. Residues 347-373 are compositionally biased toward low complexity; the sequence is KGLTGSPGSPGPDGKTGPPGPAGQDGR. The segment covering 381-400 has biased composition (low complexity); the sequence is ARGQAGVMGFPGPKGAAGEP. Low complexity predominate over residues 459–468; that stretch reads PGEAGKPGEQ. Lys531 bears the 5-hydroxylysine mark. A 4-hydroxyproline mark is found at Pro537, Pro552, and Pro558. A compositionally biased stretch (low complexity) spans 564–578; the sequence is SGPSGPAGPTGARGA. A Phosphoserine modification is found at Ser567. Pro579, Pro585, Pro588, Pro597, Pro603, Pro621, Pro630, and Pro639 each carry 4-hydroxyproline. Residues 591–618 are compositionally biased toward low complexity; it reads AGFAGPPGADGQPGAKGEPGDAGAKGDA. Residues 620–632 show a composition bias toward pro residues; that stretch reads PPGPAGPTGPPGP. Position 642 is a 5-hydroxylysine (Lys642). Positions 647–663 are enriched in low complexity; sequence SAGPPGATGFPGAAGRV. Residues Pro651 and Pro657 each carry the 4-hydroxyproline modification. A 3-hydroxyproline modification is found at Pro665. A 4-hydroxyproline mark is found at Pro666, Pro675, Pro678, Pro704, Pro712, Pro721, Pro739, Pro748, Pro751, Pro757, Pro772, Pro778, Pro784, Pro792, and Pro798. Residues 709–721 show a composition bias toward low complexity; that stretch reads KGSPGADGPAGAP. The span at 771–781 shows a compositional bias: pro residues; it reads PPGPMGPPGLA. The residue at position 807 (Lys807) is a 5-hydroxylysine. Residues 815–830 are compositionally biased toward pro residues; it reads PGPPGAPGAPGAPGPV. 3 positions are modified to 4-hydroxyproline: Pro818, Pro821, and Pro824. The span at 850–864 shows a compositional bias: low complexity; sequence AGPAGARGPAGPQGP. Basic and acidic residues predominate over residues 865–879; it reads RGDKGETGEQGDRGI. Lys868 bears the 5-hydroxylysine mark. A 5-hydroxylysine; alternate modification is found at Lys880. A glycan (O-linked (Gal...) hydroxylysine; alternate) is linked at Lys880. A 4-hydroxyproline mark is found at Pro895, Pro898, Pro916, and Pro931. The span at 898–931 shows a compositional bias: low complexity; the sequence is PGEQGPSGASGPAGPRGPPGSAGSPGKDGLNGLP. Residue Pro936 is modified to 3-hydroxyproline. Pro937 bears the 4-hydroxyproline mark. A compositionally biased stretch (pro residues) spans 949–964; sequence VGPPGPPGPPGPPGPP. The residue at position 951 (Pro951) is a 3-hydroxyproline. 4-hydroxyproline is present on Pro952. The residue at position 954 (Pro954) is a 3-hydroxyproline. Residue Pro955 is modified to 4-hydroxyproline. 3-hydroxyproline is present on Pro957. 4-hydroxyproline occurs at positions 958, 961, and 964.

It belongs to the fibrillar collagen family. In terms of assembly, trimers of one alpha 2(I) and two alpha 1(I) chains. Contains mostly 4-hydroxyproline. Proline residues at the third position of the tripeptide repeating unit (G-X-Y) are hydroxylated in some or all of the chains. In terms of processing, contains 3-hydroxyproline at a few sites. This modification occurs on the first proline residue in the sequence motif Gly-Pro-Hyp, where Hyp is 4-hydroxyproline. Post-translationally, lysine residues at the third position of the tripeptide repeating unit (G-X-Y) are 5-hydroxylated in some or all of the chains. O-glycosylated on hydroxylated lysine residues. The O-linked glycan consists of a Glc-Gal disaccharide. As to expression, expressed in bones.

Its subcellular location is the secreted. The protein resides in the extracellular space. It localises to the extracellular matrix. In terms of biological role, type I collagen is a member of group I collagen (fibrillar forming collagen). The protein is Collagen alpha-1(I) chain of Parocnus serus (Greater Haitian ground sloth).